The following is an 862-amino-acid chain: Taxadiene synthase (862 aa).

Positions 45–66 are disordered; the sequence is RVKMSRGSGGPGPVVMMSSSTG. The Mg(2+) site is built by D613, D617, N757, T761, and E765. Positions 613-617 match the DDXXD motif motif; the sequence is DDMAD.

Belongs to the terpene synthase family. Mg(2+) is required as a cofactor.

It catalyses the reaction (2E,6E,10E)-geranylgeranyl diphosphate = taxa-4(5),11(12)-diene + diphosphate. Its pathway is alkaloid biosynthesis; taxol biosynthesis; taxa-4(20),11-dien-5alpha-ol from geranylgeranyl diphosphate: step 1/2. Its function is as follows. Catalyzes the cyclization of the ubiquitous isoprenoid intermediate geranylgeranyl diphosphate to taxa-4,11-diene, the parent olefin with a taxane skeleton. The chain is Taxadiene synthase (TDC1) from Taxus chinensis (Chinese yew).